We begin with the raw amino-acid sequence, 1782 residues long: A-kinase anchor protein 12 (1782 aa).

8 disordered regions span residues 1 to 53 (MGAG…DPAT), 71 to 169 (QDEL…QAND), 189 to 400 (KTEK…APLA), 421 to 886 (VSTV…ELSE), 938 to 1089 (EREV…LKKE), 1105 to 1134 (PFTQ…ESSE), 1157 to 1274 (AIPP…ADEK), and 1305 to 1355 (KGEG…HVNE). Residue glycine 2 is the site of N-myristoyl glycine attachment. Residues serine 11, serine 19, serine 28, serine 75, and serine 96 each carry the phosphoserine modification. The segment covering 16–53 (PEGSSTPAEPEPSGGGPSAEAAPDTTADPAIAASDPAT) has biased composition (low complexity). Basic and acidic residues predominate over residues 108–125 (GQRDSEDVSKRDSDKEMA). Positions 145-154 (IIEQIPSSES) are enriched in low complexity. A Phosphoserine modification is found at serine 154. Over residues 157–168 (EELTQPTESQAN) the composition is skewed to polar residues. Phosphoserine occurs at positions 219, 248, 258, 280, 283, 286, 347, and 371. Over residues 226 to 249 (ASKESEPKQSTEKPEETLKREQSH) the composition is skewed to basic and acidic residues. An involved in PKC-binding region spans residues 266–557 (KEEGEEKQEK…TQVPADSPDS (292 aa)). 2 stretches are compositionally biased toward basic and acidic residues: residues 315-347 (KPKE…EVAS) and 363-379 (ESAH…KVEL). Residue tyrosine 374 is modified to Phosphotyrosine. Phosphoserine is present on residues serine 381 and serine 392. The segment covering 423–435 (TVEERTEEQKTEV) has biased composition (basic and acidic residues). Over residues 446 to 456 (ELVEMDAEPQE) the composition is skewed to acidic residues. Residues 458–468 (EPAKELVKLKE) are compositionally biased toward basic and acidic residues. Phosphoserine occurs at positions 483 and 505. Residues 528–537 (LSGKKQKGKR) show a composition bias toward basic residues. Residues serine 554, serine 557, serine 598, serine 612, serine 627, and serine 629 each carry the phosphoserine modification. Residues 607-627 (VTPWASFKKMVTPKKRVRRPS) carry the AKAP CaM-binding 1 motif. Residues 625 to 639 (RPSESDKEDELDKVK) show a composition bias toward basic and acidic residues. Low complexity predominate over residues 640–652 (SATLSSTESTASE). Residue threonine 642 is modified to Phosphothreonine. Serine 644, serine 645, serine 648, and serine 651 each carry phosphoserine. A compositionally biased stretch (basic and acidic residues) spans 655–674 (EEMKGSVEEPKPEEPKRKVD). A phosphoserine mark is found at serine 696, serine 697, and serine 698. The segment covering 708–724 (GGDHQKADEAGKDKETG) has biased composition (basic and acidic residues). Polar residues predominate over residues 739-749 (QGSSSPEQAGS). Serine 749, serine 761, and serine 787 each carry phosphoserine. The AKAP CaM-binding 2 motif lies at 756–776 (VSTWESFKRLVTPRKKSKSKL). The segment covering 792–803 (STPDTEPGKEES) has biased composition (basic and acidic residues). The AKAP CaM-binding 3 signature appears at 801-821 (EESWVSIKKFIPGRRKKRPDG). Serine 806 carries the phosphoserine modification. The span at 986–997 (GAEEGTEASAAE) shows a compositional bias: low complexity. Lysine 1051 is covalently cross-linked (Glycyl lysine isopeptide (Lys-Gly) (interchain with G-Cter in SUMO1)). Over residues 1072-1089 (AEAERPEEQAEASGLKKE) the composition is skewed to basic and acidic residues. Residues 1164 to 1174 (ETPTDSETDGS) are compositionally biased toward polar residues. Composition is skewed to basic and acidic residues over residues 1187-1198 (QKDEIVEIHEEN) and 1231-1251 (EETK…KEVS). Positions 1253 to 1267 (ETVSILSKTEGTQEA) are enriched in polar residues. Phosphoserine is present on residues serine 1328 and serine 1331. The segment covering 1333-1355 (VEREMVVQVEREKTEAEPTHVNE) has biased composition (basic and acidic residues). Residues serine 1391 and serine 1395 each carry the phosphoserine modification. An RII-binding region spans residues 1541–1554 (ELETKSSKLVQNII). The interval 1584-1782 (KADSQDAGQE…ESAKSELTES (199 aa)) is disordered. Serine 1587 is modified (phosphoserine). A compositionally biased stretch (polar residues) spans 1603–1612 (ASAQDETPIT). Basic and acidic residues-rich tracts occupy residues 1629-1639 (DISKDMSEASE) and 1675-1699 (VPED…KEDE). Serine 1727 carries the post-translational modification Phosphoserine. Basic and acidic residues-rich tracts occupy residues 1734–1757 (KQKE…ESDK) and 1766–1782 (ELQK…LTES).

In terms of assembly, binds to dimeric RII-alpha regulatory subunit of PKC. In terms of tissue distribution, expressed in endothelial cells, cultured fibroblasts and osteosarcoma, but not in platelets, leukocytes, monocytic cell lines or peripherical blood cells.

It localises to the cytoplasm. It is found in the cell cortex. The protein localises to the cytoskeleton. Its subcellular location is the membrane. Functionally, anchoring protein that mediates the subcellular compartmentation of protein kinase A (PKA) and protein kinase C (PKC). In Homo sapiens (Human), this protein is A-kinase anchor protein 12 (AKAP12).